A 325-amino-acid chain; its full sequence is NADH-quinone oxidoreductase subunit H (325 aa).

8 consecutive transmembrane segments (helical) span residues 8-28 (VIDI…VVTC), 81-101 (GIFT…FAIV), 114-134 (IGVL…LFAG), 159-179 (FLGL…LGAI), 186-206 (LWNV…GVAV), 237-257 (FFVG…TLFF), 265-285 (LPPF…FILI), and 304-324 (ICLP…LYNA).

The protein belongs to the complex I subunit 1 family. As to quaternary structure, NDH-1 is composed of 13 different subunits. Subunits NuoA, H, J, K, L, M, N constitute the membrane sector of the complex.

The protein localises to the cell inner membrane. The enzyme catalyses a quinone + NADH + 5 H(+)(in) = a quinol + NAD(+) + 4 H(+)(out). NDH-1 shuttles electrons from NADH, via FMN and iron-sulfur (Fe-S) centers, to quinones in the respiratory chain. The immediate electron acceptor for the enzyme in this species is believed to be ubiquinone. Couples the redox reaction to proton translocation (for every two electrons transferred, four hydrogen ions are translocated across the cytoplasmic membrane), and thus conserves the redox energy in a proton gradient. This subunit may bind ubiquinone. The chain is NADH-quinone oxidoreductase subunit H from Sodalis glossinidius (strain morsitans).